Reading from the N-terminus, the 251-residue chain is 1-(5-phosphoribosyl)-5-[(5-phosphoribosylamino)methylideneamino] imidazole-4-carboxamide isomerase (251 aa).

The Proton acceptor role is filled by Asp-8. Asp-129 (proton donor) is an active-site residue.

The protein belongs to the HisA/HisF family.

Its subcellular location is the cytoplasm. The catalysed reaction is 1-(5-phospho-beta-D-ribosyl)-5-[(5-phospho-beta-D-ribosylamino)methylideneamino]imidazole-4-carboxamide = 5-[(5-phospho-1-deoxy-D-ribulos-1-ylimino)methylamino]-1-(5-phospho-beta-D-ribosyl)imidazole-4-carboxamide. Its pathway is amino-acid biosynthesis; L-histidine biosynthesis; L-histidine from 5-phospho-alpha-D-ribose 1-diphosphate: step 4/9. This is 1-(5-phosphoribosyl)-5-[(5-phosphoribosylamino)methylideneamino] imidazole-4-carboxamide isomerase from Desulfosudis oleivorans (strain DSM 6200 / JCM 39069 / Hxd3) (Desulfococcus oleovorans).